A 232-amino-acid chain; its full sequence is tRNA1(Val) (adenine(37)-N6)-methyltransferase (232 aa).

The protein belongs to the methyltransferase superfamily. tRNA (adenine-N(6)-)-methyltransferase family.

It localises to the cytoplasm. It carries out the reaction adenosine(37) in tRNA1(Val) + S-adenosyl-L-methionine = N(6)-methyladenosine(37) in tRNA1(Val) + S-adenosyl-L-homocysteine + H(+). Functionally, specifically methylates the adenine in position 37 of tRNA(1)(Val) (anticodon cmo5UAC). This chain is tRNA1(Val) (adenine(37)-N6)-methyltransferase, found in Haemophilus influenzae (strain PittGG).